The primary structure comprises 147 residues: 3-dehydroquinate dehydratase (147 aa).

Y24 acts as the Proton acceptor in catalysis. The substrate site is built by N73, H79, and D86. The active-site Proton donor is the H99. Substrate-binding positions include 100–101 and R110; that span reads LS.

This sequence belongs to the type-II 3-dehydroquinase family. Homododecamer.

The enzyme catalyses 3-dehydroquinate = 3-dehydroshikimate + H2O. It participates in metabolic intermediate biosynthesis; chorismate biosynthesis; chorismate from D-erythrose 4-phosphate and phosphoenolpyruvate: step 3/7. In terms of biological role, catalyzes a trans-dehydration via an enolate intermediate. The chain is 3-dehydroquinate dehydratase from Hyphomonas neptunium (strain ATCC 15444).